The primary structure comprises 135 residues: Small ribosomal subunit protein uS11 (135 aa).

Over residues 1 to 11 (MPPKARAGAAV) the composition is skewed to low complexity. Positions 1–22 (MPPKARAGAAVKKVRRKERKNV) are disordered.

This sequence belongs to the universal ribosomal protein uS11 family. In terms of assembly, part of the 30S ribosomal subunit. Interacts with proteins S7 and S18. Binds to IF-3.

Functionally, located on the platform of the 30S subunit, it bridges several disparate RNA helices of the 16S rRNA. Forms part of the Shine-Dalgarno cleft in the 70S ribosome. The sequence is that of Small ribosomal subunit protein uS11 from Salinispora tropica (strain ATCC BAA-916 / DSM 44818 / JCM 13857 / NBRC 105044 / CNB-440).